We begin with the raw amino-acid sequence, 733 residues long: MSTQSRKSNSSKQPHSTHKKLDPELKFKLETLTELFPDWTNDDLIDLVQEYEDLETIIDKITSGAATKWDEVKKPSKKERQREQQQQQQQQQQAQLAAQQATQPSSQSHHNNHTHISPSHDGDHSHSAQTSHNHHQSKSSKFSSRERDSSSRSHKKSSNNAAASGPNGSGNARRERASGASRVPATSAASAASANASAVQPDHLKTAVSAAKTASSTSWAAMASDKKAAKQSAQAKKAEEQQQEQQSPQQAQHESTAPSPQQEAEPQSQSQSKSQPQSDNKSAESVSSTSTPATEDLEKPKKMTWAAIVKPKTKPSVKKSEPLEELEDLKREAAQISTEEPEAAEKVIEQVIEQVEQTPEEVVEQVEVTVVPEEVSQESEEASAQQEETAEPAAPVVPAEPEAASSEEKAAPAQPEQGTYSPVAQQQQPQQQQQPQQQQQAQQQQQQPTAYSEDKQSQAQQAQSQQAQSFYQAQPQQYGSQTPQQTPQTLQQQNAAAAAAAAQQQYYMYQNQFPGYSYPGMFDSQSYPAGYGQQYAPQSQNGSQPQTASTQQSQSGQYGVPPGYASTGRDLGAASPMAAQVQLQQQQQQQPYGGSFMPYYHFYQQSFPYGQPQYGMAGQYPYQVPKAYNYMNQYQPQQGGQTPSSQSQQGEEAQQSAQQGQATASQGQAQGSGSQGQAQTNAQQQAQLQQYYQFQQQQQQQQAAAAAAAAQQGGVPYGYSGYDFSSQATRGFY.

Positions 1–14 (MSTQSRKSNSSKQP) are enriched in polar residues. Disordered stretches follow at residues 1–24 (MSTQ…LDPE), 61–343 (ITSG…EPEA), 366–497 (VEVT…NAAA), 518–590 (YPGM…QQQQ), and 633–682 (QYQP…QTNA). In terms of domain architecture, CUE spans 24-66 (ELKFKLETLTELFPDWTNDDLIDLVQEYEDLETIIDKITSGAA). Residues 68-83 (KWDEVKKPSKKERQRE) are compositionally biased toward basic and acidic residues. Low complexity predominate over residues 84–103 (QQQQQQQQQQAQLAAQQATQ). Positions 104–117 (PSSQSHHNNHTHIS) are enriched in polar residues. Low complexity-rich tracts occupy residues 158 to 171 (SNNA…GSGN), 180 to 198 (ASRV…NASA), 206 to 223 (TAVS…AAMA), and 243 to 278 (QEQQ…QPQS). Residues 279–293 (DNKSAESVSSTSTPA) show a composition bias toward polar residues. Residues 318–333 (KKSEPLEELEDLKREA) show a composition bias toward basic and acidic residues. 5 stretches are compositionally biased toward low complexity: residues 382-404 (ASAQ…PEAA), 424-448 (AQQQ…QQQP), 457-497 (SQAQ…NAAA), 542-557 (GSQP…QSGQ), and 580-590 (QVQLQQQQQQQ).

The protein belongs to the DEF1 family. In terms of assembly, homodimer; may form higher order oligomers. Interacts with the large RNA polymerase II subunit RPO21; the interaction is direct and serves to bridge RPO21 to the Elongin complex in a manner dependent on transcription stress. Interacts with RAD26. Ubiquitinated. Post-translationally, proteolytically cleaved by the proteasome in response to transcription stress; the resulting N-terminal form constitutes the activated nuclear form and the C-terminal portion is degraded.

The protein localises to the cytoplasm. It is found in the nucleus. The protein resides in the chromosome. Its subcellular location is the telomere. Recruits the ubiquitination machinery to RNA polymerase II for polyubiquitination, removal and degradation, when the transcription-coupled repair (TCR) factor RAD26 fails to efficiently displace stalled RNA polymerase II. Also involved in telomere length regulation. Binds DNA. The protein is RNA polymerase II degradation factor 1 (DEF1) of Lachancea thermotolerans (strain ATCC 56472 / CBS 6340 / NRRL Y-8284) (Yeast).